We begin with the raw amino-acid sequence, 359 residues long: Small ribosomal subunit biogenesis GTPase RsgA (359 aa).

Positions 101–259 (KRKGSQAIAS…LMDNPGIREV (159 aa)) constitute a CP-type G domain. Residues 149–152 (NKKD) and 201–209 (GSSGAGKST) contribute to the GTP site. Residues Cys-284, Cys-289, His-291, and Cys-297 each coordinate Zn(2+). Residues 331–359 (DPEEARKKKQKDKQMSKALQKRLKDKGRK) are disordered. Positions 349-359 (LQKRLKDKGRK) are enriched in basic residues.

It belongs to the TRAFAC class YlqF/YawG GTPase family. RsgA subfamily. Monomer. Associates with 30S ribosomal subunit, binds 16S rRNA. It depends on Zn(2+) as a cofactor.

The protein resides in the cytoplasm. Its function is as follows. One of several proteins that assist in the late maturation steps of the functional core of the 30S ribosomal subunit. Helps release RbfA from mature subunits. May play a role in the assembly of ribosomal proteins into the subunit. Circularly permuted GTPase that catalyzes slow GTP hydrolysis, GTPase activity is stimulated by the 30S ribosomal subunit. The chain is Small ribosomal subunit biogenesis GTPase RsgA from Leptospira interrogans serogroup Icterohaemorrhagiae serovar Lai (strain 56601).